The sequence spans 342 residues: Oxygen-dependent coproporphyrinogen-III oxidase (342 aa).

A substrate-binding site is contributed by serine 107. Histidine 111 and histidine 121 together coordinate a divalent metal cation. The active-site Proton donor is the histidine 121. 123–125 (NYR) contacts substrate. Residues histidine 155 and histidine 185 each coordinate a divalent metal cation. The tract at residues 277 to 312 (YVEFNLVYDRGTIFGLQTNGRTESILMSLPPLVRWE) is important for dimerization.

It belongs to the aerobic coproporphyrinogen-III oxidase family. As to quaternary structure, homodimer. A divalent metal cation serves as cofactor.

It is found in the cytoplasm. It carries out the reaction coproporphyrinogen III + O2 + 2 H(+) = protoporphyrinogen IX + 2 CO2 + 2 H2O. It participates in porphyrin-containing compound metabolism; protoporphyrin-IX biosynthesis; protoporphyrinogen-IX from coproporphyrinogen-III (O2 route): step 1/1. Functionally, involved in the heme and chlorophyll biosynthesis. Catalyzes the aerobic oxidative decarboxylation of propionate groups of rings A and B of coproporphyrinogen-III to yield the vinyl groups in protoporphyrinogen-IX. The sequence is that of Oxygen-dependent coproporphyrinogen-III oxidase from Synechococcus sp. (strain ATCC 27144 / PCC 6301 / SAUG 1402/1) (Anacystis nidulans).